The chain runs to 215 residues: Leucyl/phenylalanyl-tRNA--protein transferase (215 aa).

The protein belongs to the L/F-transferase family.

Its subcellular location is the cytoplasm. The catalysed reaction is N-terminal L-lysyl-[protein] + L-leucyl-tRNA(Leu) = N-terminal L-leucyl-L-lysyl-[protein] + tRNA(Leu) + H(+). The enzyme catalyses N-terminal L-arginyl-[protein] + L-leucyl-tRNA(Leu) = N-terminal L-leucyl-L-arginyl-[protein] + tRNA(Leu) + H(+). It carries out the reaction L-phenylalanyl-tRNA(Phe) + an N-terminal L-alpha-aminoacyl-[protein] = an N-terminal L-phenylalanyl-L-alpha-aminoacyl-[protein] + tRNA(Phe). Functions in the N-end rule pathway of protein degradation where it conjugates Leu, Phe and, less efficiently, Met from aminoacyl-tRNAs to the N-termini of proteins containing an N-terminal arginine or lysine. This is Leucyl/phenylalanyl-tRNA--protein transferase from Campylobacter jejuni subsp. doylei (strain ATCC BAA-1458 / RM4099 / 269.97).